The primary structure comprises 306 residues: uncharacterized protein (306 aa).

An N-linked (GlcNAc...) asparagine glycan is attached at asparagine 208. Transmembrane regions (helical) follow at residues 218–238 and 284–304; these read VFEI…VLFY and VMLV…KITK.

It localises to the membrane. This is an uncharacterized protein from Encephalitozoon cuniculi (strain GB-M1) (Microsporidian parasite).